A 296-amino-acid polypeptide reads, in one-letter code: (3R)-3-[(carboxymethyl)amino]fatty acid oxygenase/decarboxylase (296 aa).

The (3R)-3-[(carboxymethyl)amino]butanoate site is built by Tyr66, Tyr71, and Gly98. Residues Tyr66, Tyr71, and Gly98 each coordinate (3R)-3-{[carboxy(hydroxy)methyl]amino}butanoate. Fe(2+) is bound by residues His102 and Asp104. (3R)-3-[(carboxymethyl)amino]butanoate-binding residues include Tyr105 and Lys163. Residues Tyr105 and Lys163 each contribute to the (3R)-3-{[carboxy(hydroxy)methyl]amino}butanoate site. His265 serves as a coordination point for Fe(2+). His269 is a binding site for 2-oxoglutarate. Arg280 is a binding site for (3R)-3-[(carboxymethyl)amino]butanoate. A (3R)-3-{[carboxy(hydroxy)methyl]amino}butanoate-binding site is contributed by Arg280.

It belongs to the TfdA dioxygenase family. It depends on Fe(2+) as a cofactor.

The catalysed reaction is a (3R)-3-[(carboxymethyl)amino]fatty acid + 2 2-oxoglutarate + 2 O2 = a (3R)-3-isocyanyl-fatty acid + 2 succinate + 3 CO2 + 2 H2O. The enzyme catalyses a (3R)-3-[(carboxymethyl)amino]fatty acid + 2-oxoglutarate + O2 = a (3R)-3-{[carboxy(hydroxy)methyl]amino}fatty acid + succinate + CO2. It carries out the reaction a (3R)-3-{[carboxy(hydroxy)methyl]amino}fatty acid + 2-oxoglutarate + O2 = a (3R)-3-isocyanyl-fatty acid + succinate + 2 CO2 + 2 H2O. It catalyses the reaction (3R)-3-[(carboxymethyl)amino]butanoate + 2 2-oxoglutarate + 2 O2 = (3R)-3-isocyanylbutanoate + 2 succinate + 3 CO2 + 2 H2O. The catalysed reaction is (3R)-3-[(carboxymethyl)amino]butanoate + 2-oxoglutarate + O2 = (3R)-3-{[carboxy(hydroxy)methyl]amino}butanoate + succinate + CO2. The enzyme catalyses (3R)-3-{[carboxy(hydroxy)methyl]amino}butanoate + 2-oxoglutarate + O2 = (3R)-3-isocyanylbutanoate + succinate + 2 CO2 + 2 H2O. Involved in the biosynthesis of a unique class of isonitrile lipopeptides (INLPs). Catalyzes the conversion of (3R)-3-[(carboxymethyl)amino]fatty acids such as (3R)-3-[(carboxymethyl)amino]butanoate (CABA) to (3R)-3-isocyanylbutanoate (INBA) through an oxidative decarboxylation mechanism, thereby generating the isonitrile group of INLPs. This Streptomyces coeruleorubidus protein is (3R)-3-[(carboxymethyl)amino]fatty acid oxygenase/decarboxylase.